The following is a 365-amino-acid chain: Protein mab-21-like (365 aa).

This sequence belongs to the mab-21 family.

This chain is Protein mab-21-like, found in Anopheles gambiae (African malaria mosquito).